The chain runs to 559 residues: Prolyl 4-hydroxylase subunit alpha-1 (559 aa).

The signal sequence occupies residues 1-16 (MRLALLVLATIGYAVA). Asn158 is a glycosylation site (N-linked (GlcNAc...) asparagine). In terms of domain architecture, Fe2OG dioxygenase spans 404-512 (TAEELQIANY…KWVSNKWIHE (109 aa)). Fe cation-binding residues include His422, Asp424, and His493. Residue Lys503 participates in 2-oxoglutarate binding.

The protein belongs to the P4HA family. Heterotetramer of two alpha chains and two beta chains. Exists either as a phy-1(2)/pdi-2(2) tetramer or as a phy-1/phy-2/pdi-2(2) tetramer. The cofactor is Fe(2+). Requires L-ascorbate as cofactor.

It is found in the endoplasmic reticulum lumen. It carries out the reaction L-prolyl-[collagen] + 2-oxoglutarate + O2 = trans-4-hydroxy-L-prolyl-[collagen] + succinate + CO2. Its function is as follows. Catalyzes the post-translational formation of 4-hydroxyproline in -Xaa-Pro-Gly- sequences in collagens and other proteins. In Caenorhabditis elegans, this protein is Prolyl 4-hydroxylase subunit alpha-1 (dpy-18).